The primary structure comprises 157 residues: UPF0758 protein VC_0510 (157 aa).

The 122-residue stretch at 36–157 (ALTNPDATKE…CTSFAERGWL (122 aa)) folds into the MPN domain. The Zn(2+) site is built by H107, H109, and D120. The JAMM motif signature appears at 107 to 120 (HNHPSGDSTPSQAD).

Belongs to the UPF0758 family.

The chain is UPF0758 protein VC_0510 from Vibrio cholerae serotype O1 (strain ATCC 39315 / El Tor Inaba N16961).